A 340-amino-acid chain; its full sequence is MCAQYCISFADVEKAHINIRDSIHLTPVLTSSILNQLTGRNLFFKCELFQKTGSFKIRGALNAVRSLVPDALERKPKAVVTHSSGNHGQALTYAAKLEGIPAYIVVPQTAPDCKKLAIQAYGASIVYCEPSDESRENVAKRVTEETEGIMVHPNQEPAVIAGQGTIALEVLNQVPLVDALVVPVGGGGMLAGIAITVKALKPSVKVYAAEPSNADDCYQSKLKGKLMPNLYPPETIADGVKSSIGLNTWPIIRDLVDDIFTVTEDEIKCATQLVWERMKLLIEPTAGVGVAAVLSQHFQTVSPEVKNICIVLSGGNVDLTSSITWVKQAERPASYQSVSV.

Glutamate 13 lines the Mg(2+) pocket. Residues serine 31, serine 32, isoleucine 33, lysine 51, and threonine 52 each coordinate ATP. Lysine 56 serves as the catalytic Proton acceptor. Lysine 56 carries the post-translational modification N6-(pyridoxal phosphate)lysine. 2 residues coordinate Ca(2+): proline 69 and threonine 81. Catalysis depends on serine 84, which acts as the Proton acceptor. Position 86 (asparagine 86) interacts with pyridoxal 5'-phosphate. Residue glutamine 89 coordinates ATP. Cysteine 113 carries the S-nitrosocysteine modification. Tyrosine 121 provides a ligand contact to ATP. Asparagine 154 is a pyridoxal 5'-phosphate binding site. Mg(2+) is bound at residue aspartate 178. Pyridoxal 5'-phosphate-binding residues include glycine 185, glycine 186, glycine 187, glycine 188, and methionine 189. Mg(2+) contacts are provided by glutamate 210, alanine 214, aspartate 216, and asparagine 247. Ca(2+) is bound by residues glutamate 210, alanine 214, aspartate 216, and asparagine 247. Residues glutamate 210, alanine 214, and aspartate 216 each coordinate Mn(2+). Lysine 279 provides a ligand contact to ATP. Position 313 (serine 313) interacts with pyridoxal 5'-phosphate. Position 316 (asparagine 316) interacts with ATP.

The protein belongs to the serine/threonine dehydratase family. In terms of assembly, homodimer. It depends on Mg(2+) as a cofactor. Mn(2+) serves as cofactor. Requires Ca(2+) as cofactor. The cofactor is pyridoxal 5'-phosphate. Post-translationally, S-nitrosylated, leading to decrease the enzyme activity. Expressed in the cerebellum, hippocampus, dorsolateral prefrontal cortex, and in motor neurons and glial cells of the lumbar spinal cord (at protein level). Increased in the dorsolateral prefrontal cortex of schizophrenic patients (at protein level). Brain: expressed at high levels in hippocampus and corpus callosum, intermediate levels in substantia nigra and caudate, and low levels in amygdala, thalamus, and subthalamic nuclei. Expressed in heart, skeletal muscle, kidney, and liver.

The enzyme catalyses L-serine = D-serine. The catalysed reaction is D-serine = pyruvate + NH4(+). It carries out the reaction L-serine = pyruvate + NH4(+). With respect to regulation, allosterically activated by magnesium, and possibly also other divalent metal cations. Allosterically activated by ATP, ADP or GTP. Competitively inhibited by malonate. Inhibited by meso-tartrate and malonate. In terms of biological role, catalyzes the synthesis of D-serine from L-serine. D-serine is a key coagonist with glutamate at NMDA receptors. Has dehydratase activity towards both L-serine and D-serine. The protein is Serine racemase (SRR) of Homo sapiens (Human).